A 1317-amino-acid polypeptide reads, in one-letter code: Nucleoporin NUP145 (1317 aa).

The segment covering 1-16 (MFNKSVNSGFTFGNQN) has biased composition (polar residues). Positions 1-36 (MFNKSVNSGFTFGNQNTSTPTSTPAQPSSSLQFPQK) are disordered. One copy of the FG 1 repeat lies at 12 to 13 (FG). Low complexity predominate over residues 17-30 (TSTPTSTPAQPSSS). Residues 39–42 (GLFG) form a GLFG 1 repeat. The stretch at 79-80 (FG) is one FG 2 repeat. The stretch at 89–92 (GLFG) is one GLFG 2 repeat. The stretch at 106–107 (FG) is one FG 3 repeat. Positions 133-165 (QNGGLFGNSNNNNITSTTQNGGLFGKPTTTPAG) are disordered. GLFG repeat units lie at residues 136–139 (GLFG), 154–157 (GLFG), 168–171 (GLFG), and 181–184 (GLFG). Residues 139–164 (GNSNNNNITSTTQNGGLFGKPTTTPA) are compositionally biased toward low complexity. The GLFG 7; approximate repeat unit spans residues 193–196 (GIFG). One copy of the GLFG 8 repeat lies at 206 to 209 (GLFG). The disordered stretch occupies residues 249–278 (TSSLSDVNGKSDAEPKPIENRRTYSFSSSV). Basic and acidic residues predominate over residues 257–270 (GKSDAEPKPIENRR). Residue Ser273 is modified to Phosphoserine. Residues 369–385 (RKLKIDSNRSAAKKLKL) carry the Bipartite nuclear localization signal motif. A disordered region spans residues 390-450 (PAITKKHMQD…NLNKQDGENT (61 aa)). Residues 398-523 (QDEQDSSENE…FGKIVIFRSS (126 aa)) are required for autocatalytic cleavage. Phosphoserine occurs at positions 403, 404, and 414. The span at 418-427 (IDRKENRDNN) shows a compositional bias: basic and acidic residues. Over residues 428 to 444 (LDNTYLNGKEQSNNLNK) the composition is skewed to polar residues. One can recognise a Peptidase S59 domain in the interval 458-605 (SFGYWCSPSP…GTWTFKVNHF (148 aa)). A nucleoporin RNA-binding motif (NRM) region spans residues 460–604 (GYWCSPSPEQ…GGTWTFKVNH (145 aa)). Phosphoserine occurs at positions 667, 679, and 689. Thr751 is subject to Phosphothreonine.

This sequence belongs to the nucleoporin GLFG family. As to quaternary structure, component of the nuclear pore complex (NPC). NPC constitutes the exclusive means of nucleocytoplasmic transport. NPCs allow the passive diffusion of ions and small molecules and the active, nuclear transport receptor-mediated bidirectional transport of macromolecules such as proteins, RNAs, ribonucleoparticles (RNPs), and ribosomal subunits across the nuclear envelope. Due to its 8-fold rotational symmetry, all subunits are present with 8 copies or multiples thereof. NUP145C is part of the heptameric 0.5 MDa autoassembling NUP84 NPC subcomplex (NUP84, NUP85, NUP120, NUP133, NUP145C, SEC13 and SEH1). NUP145N may bind homomeric RNA and interacts through its FG repeats with karyopherins. Interacts with MLP1 and MLP2. NUP145 is autocatalytically cleaved in NUP145N and NUP145C.

Its subcellular location is the nucleus. It is found in the nuclear pore complex. The protein resides in the nucleus membrane. In terms of biological role, functions as a component of the nuclear pore complex (NPC). NPC components, collectively referred to as nucleoporins (NUPs), can play the role of both NPC structural components and of docking or interaction partners for transiently associated nuclear transport factors. Active directional transport is assured by both, a Phe-Gly (FG) repeat affinity gradient for these transport factors across the NPC and a transport cofactor concentration gradient across the nuclear envelope (GSP1 and GSP2 GTPases associated predominantly with GTP in the nucleus, with GDP in the cytoplasm). NUP145 is autocatalytically cleaved in vivo in 2 polypeptides which assume different functions in the NPC. NUP145N as one of the FG repeat nucleoporins participates in karyopherin interactions and contains part of the autocatalytic cleavage activity. NUP145C as part of the NUP84 complex is involved in nuclear poly(A)+ RNA and tRNA export. It is also required for normal NPC distribution (probably through interactions with MLP1 and MLP2) and NPC assembly, as well as for normal nuclear envelope organization. The polypeptide is Nucleoporin NUP145 (NUP145) (Saccharomyces cerevisiae (strain ATCC 204508 / S288c) (Baker's yeast)).